The following is a 611-amino-acid chain: Phosphatidylinositol 3,4,5-trisphosphate 3-phosphatase and protein-tyrosine-phosphatase PTEN2A (611 aa).

2 disordered regions span residues 1 to 42 (MSSE…GVAS) and 87 to 109 (GIRL…SSAT). Phosphoserine is present on Ser-91. The span at 100 to 109 (TTTEGTSSAT) shows a compositional bias: low complexity. Positions 145–324 (RRYQEGGFDL…KYFERILTYF (180 aa)) constitute a Phosphatase tensin-type domain. Cys-263 (phosphocysteine intermediate) is an active-site residue. The C2 tensin-type domain occupies 331–458 (GRRCMLRGFR…FMVEVVLADI (128 aa)). Residues 462–486 (IPTNPSSETASKTPEETSAANSSPV) are compositionally biased toward polar residues. The segment at 462-589 (IPTNPSSETA…VNASSSSESE (128 aa)) is disordered. The span at 495–507 (PDKETENPDKDDV) shows a compositional bias: basic and acidic residues. At Ser-509 the chain carries Phosphoserine. Polar residues-rich tracts occupy residues 514–530 (DSTG…SQTP) and 549–565 (VSIS…QGVT).

This sequence belongs to the PTEN phosphatase protein family. In terms of tissue distribution, expressed in seedlings, roots, stems, leaves, flowers and siliques. However, at protein level, not observed in older leaves and mature siliques.

It catalyses the reaction O-phospho-L-tyrosyl-[protein] + H2O = L-tyrosyl-[protein] + phosphate. The catalysed reaction is a 1,2-diacyl-sn-glycero-3-phospho-(1D-myo-inositol-3,4,5-trisphosphate) + H2O = a 1,2-diacyl-sn-glycero-3-phospho-(1D-myo-inositol-4,5-bisphosphate) + phosphate. Functionally, binds phosphatidic acid. Protein tyrosine phosphatase that also exhibits lipid phosphatase activity. Hydrolyzed poorly p-nitrophenyl phosphate (p-NPP). Can use PtdIns isomers as substrates. Removes efficiently phosphate from the D3 position of the inositol ring, less from the D4 position and not at all from the D5 position on monophosphorylated PtdIns isomers (PIPs). The presence of a phosphate group in the D5 position on PIP(2) isomers reduces lipid phosphatase activity. Mostly active on PtdIns(3)P and PtdIns(3,4)P(2), to a lower extent, on PtdIns(4)P and PtdIns(3,5)P(2), but barely against PtdIns(3,4,5)P(3) as substrate. This Arabidopsis thaliana (Mouse-ear cress) protein is Phosphatidylinositol 3,4,5-trisphosphate 3-phosphatase and protein-tyrosine-phosphatase PTEN2A.